A 98-amino-acid polypeptide reads, in one-letter code: MNKHFLLLFSLFYFIVEATSLKCVTCHLRTQSDHCRRGFGVCLAQKHEICMSLRIYFSGSLQLSYMVCQRFCKNLTYIFNNRTYTHKCCNSDFCNFRL.

The first 20 residues, 1 to 20 (MNKHFLLLFSLFYFIVEATS), serve as a signal peptide directing secretion. The region spanning 21–97 (LKCVTCHLRT…CCNSDFCNFR (77 aa)) is the UPAR/Ly6 domain. Cystine bridges form between Cys-23/Cys-50, Cys-26/Cys-35, Cys-42/Cys-68, and Cys-72/Cys-88.

The protein belongs to the PATE family.

Its subcellular location is the secreted. The sequence is that of Prostate and testis expressed protein 3 (Pate3) from Mus musculus (Mouse).